A 160-amino-acid chain; its full sequence is Ribosomal RNA large subunit methyltransferase H (160 aa).

Leu-76 and Gly-108 together coordinate S-adenosyl-L-methionine.

Belongs to the RNA methyltransferase RlmH family. In terms of assembly, homodimer.

The protein localises to the cytoplasm. The catalysed reaction is pseudouridine(1915) in 23S rRNA + S-adenosyl-L-methionine = N(3)-methylpseudouridine(1915) in 23S rRNA + S-adenosyl-L-homocysteine + H(+). Functionally, specifically methylates the pseudouridine at position 1915 (m3Psi1915) in 23S rRNA. The sequence is that of Ribosomal RNA large subunit methyltransferase H from Rhodopseudomonas palustris (strain ATCC BAA-98 / CGA009).